The following is a 270-amino-acid chain: Undecaprenyl-diphosphatase (270 aa).

Helical transmembrane passes span 1–21, 39–59, 87–107, 114–134, 147–167, 193–213, 223–243, and 250–270; these read MDLF…FLPI, QGLV…MLYF, SHLV…GLAC, VARD…LLWW, ALSW…LIPG, FLMA…DLFA, FLGV…HGLL, and TMTP…ATLG.

The protein belongs to the UppP family.

It is found in the cell inner membrane. It carries out the reaction di-trans,octa-cis-undecaprenyl diphosphate + H2O = di-trans,octa-cis-undecaprenyl phosphate + phosphate + H(+). Catalyzes the dephosphorylation of undecaprenyl diphosphate (UPP). Confers resistance to bacitracin. This is Undecaprenyl-diphosphatase from Magnetococcus marinus (strain ATCC BAA-1437 / JCM 17883 / MC-1).